A 527-amino-acid polypeptide reads, in one-letter code: Bifunctional purine biosynthesis protein PurH (527 aa).

In terms of domain architecture, MGS-like spans 1–149 (MTADLLPVRR…KNFARVAVAT (149 aa)).

This sequence belongs to the PurH family.

It carries out the reaction (6R)-10-formyltetrahydrofolate + 5-amino-1-(5-phospho-beta-D-ribosyl)imidazole-4-carboxamide = 5-formamido-1-(5-phospho-D-ribosyl)imidazole-4-carboxamide + (6S)-5,6,7,8-tetrahydrofolate. It catalyses the reaction IMP + H2O = 5-formamido-1-(5-phospho-D-ribosyl)imidazole-4-carboxamide. Its pathway is purine metabolism; IMP biosynthesis via de novo pathway; 5-formamido-1-(5-phospho-D-ribosyl)imidazole-4-carboxamide from 5-amino-1-(5-phospho-D-ribosyl)imidazole-4-carboxamide (10-formyl THF route): step 1/1. The protein operates within purine metabolism; IMP biosynthesis via de novo pathway; IMP from 5-formamido-1-(5-phospho-D-ribosyl)imidazole-4-carboxamide: step 1/1. The polypeptide is Bifunctional purine biosynthesis protein PurH (Stenotrophomonas maltophilia (strain R551-3)).